Consider the following 118-residue polypeptide: Myotrophin (118 aa).

ANK repeat units lie at residues M1 to R30, G34 to D65, and H67 to G98.

This sequence belongs to the myotrophin family.

The protein resides in the cytoplasm. Its subcellular location is the nucleus. The protein localises to the perinuclear region. Functionally, regulates NF-kappa-B transcription factor activity. Promotes growth of cardiomyocytes, but not cardiomyocyte proliferation. Promotes cardiac muscle hypertrophy. Plays a role in the regulation of the growth of actin filaments. Inhibits the activity of the F-actin-capping protein complex. The sequence is that of Myotrophin (MTPN) from Gallus gallus (Chicken).